A 117-amino-acid chain; its full sequence is UPF0295 protein GK0479 (117 aa).

2 consecutive transmembrane segments (helical) span residues 12 to 32 (IRTFALSLIFIGVIVMYLGLF) and 42 to 62 (LFMLFGMLFLVASGIVYFWIG).

Belongs to the UPF0295 family.

The protein resides in the cell membrane. The protein is UPF0295 protein GK0479 of Geobacillus kaustophilus (strain HTA426).